We begin with the raw amino-acid sequence, 301 residues long: Phosphatidylglycerol--prolipoprotein diacylglyceryl transferase (301 aa).

Transmembrane regions (helical) follow at residues 17–37 (LAVR…IVVG), 59–79 (MLFY…VLFY), and 97–117 (GGMS…LFAY). Residue arginine 142 participates in a 1,2-diacyl-sn-glycero-3-phospho-(1'-sn-glycerol) binding. Helical transmembrane passes span 230 to 250 (MGAI…TVEF) and 265 to 285 (LSMG…LLVW).

The protein belongs to the Lgt family.

The protein localises to the cell inner membrane. The catalysed reaction is L-cysteinyl-[prolipoprotein] + a 1,2-diacyl-sn-glycero-3-phospho-(1'-sn-glycerol) = an S-1,2-diacyl-sn-glyceryl-L-cysteinyl-[prolipoprotein] + sn-glycerol 1-phosphate + H(+). It participates in protein modification; lipoprotein biosynthesis (diacylglyceryl transfer). In terms of biological role, catalyzes the transfer of the diacylglyceryl group from phosphatidylglycerol to the sulfhydryl group of the N-terminal cysteine of a prolipoprotein, the first step in the formation of mature lipoproteins. This chain is Phosphatidylglycerol--prolipoprotein diacylglyceryl transferase, found in Paraburkholderia phytofirmans (strain DSM 17436 / LMG 22146 / PsJN) (Burkholderia phytofirmans).